A 1005-amino-acid polypeptide reads, in one-letter code: Beta/gamma crystallin domain-containing protein 3 (1005 aa).

5 positions are modified to phosphoserine: S122, S129, S130, S136, and S140. Disordered stretches follow at residues E132–V159 and N173–T198. A compositionally biased stretch (acidic residues) spans Q180–A189. 9 consecutive Beta/gamma crystallin 'Greek key' domains span residues G367–L416, G462–Q500, L512–G556, G557–Q599, S605–S647, G648–Q690, H701–R737, G738–D781, and G828–K869. Positions P871 to E1003 constitute a Ricin B-type lectin domain.

The protein belongs to the beta/gamma-crystallin family.

The chain is Beta/gamma crystallin domain-containing protein 3 (Crybg3) from Mus musculus (Mouse).